We begin with the raw amino-acid sequence, 442 residues long: Syndecan-3 (442 aa).

Disordered regions lie at residues 1-24 (MKPG…AAAG) and 57-87 (RPVD…SGYF). Topologically, residues 1–387 (MKPGPPHRAG…SILERKEVLV (387 aa)) are extracellular. A compositionally biased stretch (gly residues) spans 13 to 24 (HGAGAGAGAAAG). Over residues 63 to 77 (GSGDDDSFPDDELDD) the composition is skewed to acidic residues. 4 O-linked (Xyl...) (glycosaminoglycan) serine glycosylation sites follow: serine 80, serine 82, serine 84, and serine 91. Residue serine 108 is glycosylated (O-linked (GalNAc) serine; by GALNT13). O-linked (GalNAc) threonine; by GALNT13 glycosylation is found at threonine 109 and threonine 110. Disordered regions lie at residues 150 to 173 (EEPS…STGD), 225 to 326 (TTPE…ETTQ), and 340 to 367 (AAKA…AIDS). Composition is skewed to low complexity over residues 156–173 (ATTV…STGD), 225–238 (TTPE…TAAV), and 275–286 (TLPLGTTAPGPT). An O-linked (GalNAc) serine; by GALNT13 glycan is attached at serine 160. 3 O-linked (GalNAc) threonine; by GALNT13 glycosylation sites follow: threonine 161, threonine 162, and threonine 169. An O-linked (GalNAc) serine; by GALNT13 glycan is attached at serine 170. O-linked (GalNAc) threonine; by GALNT13 glycosylation is present at threonine 171. A compositionally biased stretch (polar residues) spans 288–299 (VAQTPTPETFLT). O-linked (Xyl...) (glycosaminoglycan) serine glycans are attached at residues serine 314 and serine 367. A helical transmembrane segment spans residues 388-408 (AVIVGGVVGALFAAFLVTLLI). 4 positions are modified to phosphotyrosine: tyrosine 409, tyrosine 419, tyrosine 431, and tyrosine 441. Over 409-442 (YRMKKKDEGSYTLEEPKQASVTYQKPDKQEEFYA) the chain is Cytoplasmic. The interval 419 to 442 (YTLEEPKQASVTYQKPDKQEEFYA) is disordered. The segment covering 433–442 (KPDKQEEFYA) has biased composition (basic and acidic residues).

The protein belongs to the syndecan proteoglycan family. Interacts with TIAM1. Interacts with PTN (via heparan sulfate chains); this interaction mediates the neurite outgrowth-promoting signal from PTN to the cytoskeleton of growing neurites; this interaction mediates osteoblast recruitment. Interacts with MDK; this interaction induces SDC3 clustering; this interaction induces neuronal cell adhesion and neurite outgrowth. O-glycosylated within the Thr/Ser-rich region which could interact with lectin domains on other molecules. As to expression, expressed in the nervous system, the adrenal gland, and the spleen.

The protein resides in the cell membrane. Its function is as follows. Cell surface proteoglycan that may bear heparan sulfate. May have a role in the organization of cell shape by affecting the actin cytoskeleton, possibly by transferring signals from the cell surface in a sugar-dependent mechanism. In Homo sapiens (Human), this protein is Syndecan-3 (SDC3).